The sequence spans 80 residues: uncharacterized protein (80 aa).

4Fe-4S ferredoxin-type domains follow at residues 21–49 (KIIEIDYNKCKNCLSCYRVCKNNVFAIKN) and 50–80 (NRVVVKNENNCTKCGECLKVCRYGAIILYDA). The [4Fe-4S] cluster site is built by Cys30, Cys33, Cys36, Cys40, Cys60, Cys63, Cys66, and Cys70.

[4Fe-4S] cluster is required as a cofactor.

This is an uncharacterized protein from Methanocaldococcus jannaschii (strain ATCC 43067 / DSM 2661 / JAL-1 / JCM 10045 / NBRC 100440) (Methanococcus jannaschii).